The primary structure comprises 563 residues: Arginine--tRNA ligase (563 aa).

Positions 134-144 (ANPTGLLHMGN) match the 'HIGH' region motif.

The protein belongs to the class-I aminoacyl-tRNA synthetase family. Monomer.

The protein resides in the cytoplasm. The enzyme catalyses tRNA(Arg) + L-arginine + ATP = L-arginyl-tRNA(Arg) + AMP + diphosphate. The chain is Arginine--tRNA ligase from Heliobacterium modesticaldum (strain ATCC 51547 / Ice1).